The chain runs to 367 residues: 4-hydroxy-3-methylbut-2-en-1-yl diphosphate synthase (flavodoxin) (367 aa).

[4Fe-4S] cluster is bound by residues Cys-270, Cys-273, Cys-305, and Glu-312.

The protein belongs to the IspG family. It depends on [4Fe-4S] cluster as a cofactor.

The enzyme catalyses (2E)-4-hydroxy-3-methylbut-2-enyl diphosphate + oxidized [flavodoxin] + H2O + 2 H(+) = 2-C-methyl-D-erythritol 2,4-cyclic diphosphate + reduced [flavodoxin]. Its pathway is isoprenoid biosynthesis; isopentenyl diphosphate biosynthesis via DXP pathway; isopentenyl diphosphate from 1-deoxy-D-xylulose 5-phosphate: step 5/6. Converts 2C-methyl-D-erythritol 2,4-cyclodiphosphate (ME-2,4cPP) into 1-hydroxy-2-methyl-2-(E)-butenyl 4-diphosphate. The sequence is that of 4-hydroxy-3-methylbut-2-en-1-yl diphosphate synthase (flavodoxin) from Buchnera aphidicola subsp. Schizaphis graminum (strain Sg).